Consider the following 451-residue polypeptide: Tubulin alpha-3 chain (451 aa).

Gln11 is a binding site for GTP. Position 40 is an N6-acetyllysine (Lys40). Glu71, Gly144, Thr145, Thr179, Asn206, and Asn228 together coordinate GTP. Residue Glu71 participates in Mg(2+) binding. Residue Glu254 is part of the active site.

It belongs to the tubulin family. Dimer of alpha and beta chains. A typical microtubule is a hollow water-filled tube with an outer diameter of 25 nm and an inner diameter of 15 nM. Alpha-beta heterodimers associate head-to-tail to form protofilaments running lengthwise along the microtubule wall with the beta-tubulin subunit facing the microtubule plus end conferring a structural polarity. Microtubules usually have 13 protofilaments but different protofilament numbers can be found in some organisms and specialized cells. It depends on Mg(2+) as a cofactor. Undergoes a tyrosination/detyrosination cycle, the cyclic removal and re-addition of a C-terminal tyrosine residue by the enzymes tubulin tyrosine carboxypeptidase (TTCP) and tubulin tyrosine ligase (TTL), respectively. Post-translationally, acetylation of alpha chains at Lys-40 stabilizes microtubules and affects affinity and processivity of microtubule motors. This modification has a role in multiple cellular functions, ranging from cell motility, cell cycle progression or cell differentiation to intracellular trafficking and signaling.

It localises to the cytoplasm. Its subcellular location is the cytoskeleton. The enzyme catalyses GTP + H2O = GDP + phosphate + H(+). In terms of biological role, tubulin is the major constituent of microtubules, a cylinder consisting of laterally associated linear protofilaments composed of alpha- and beta-tubulin heterodimers. Microtubules grow by the addition of GTP-tubulin dimers to the microtubule end, where a stabilizing cap forms. Below the cap, tubulin dimers are in GDP-bound state, owing to GTPase activity of alpha-tubulin. This chain is Tubulin alpha-3 chain (TUBA3), found in Hordeum vulgare (Barley).